A 201-amino-acid chain; its full sequence is Lipopolysaccharide core heptose(II)-phosphate phosphatase (201 aa).

Residues 1-35 (MLAFTLRFIKNKRYLATLAGALVIIAGLTSQHAWS) form the signal peptide.

The protein belongs to the phosphoglycerate mutase family. Ais subfamily.

Its subcellular location is the periplasm. The protein operates within bacterial outer membrane biogenesis; lipopolysaccharide metabolism. Catalyzes the dephosphorylation of heptose(II) of the outer membrane lipopolysaccharide core. The chain is Lipopolysaccharide core heptose(II)-phosphate phosphatase from Salmonella schwarzengrund (strain CVM19633).